Reading from the N-terminus, the 263-residue chain is NH(3)-dependent NAD(+) synthetase (263 aa).

29 to 36 (GISGGIDS) contributes to the ATP binding site. Asp35 contributes to the Mg(2+) binding site. A deamido-NAD(+)-binding site is contributed by Arg114. Thr134 is an ATP binding site. Glu139 provides a ligand contact to Mg(2+). Lys147 and Asp154 together coordinate deamido-NAD(+). The ATP site is built by Lys163 and Ser185. Deamido-NAD(+) is bound at residue 244-245 (HK).

The protein belongs to the NAD synthetase family. In terms of assembly, homodimer.

The enzyme catalyses deamido-NAD(+) + NH4(+) + ATP = AMP + diphosphate + NAD(+) + H(+). It participates in cofactor biosynthesis; NAD(+) biosynthesis; NAD(+) from deamido-NAD(+) (ammonia route): step 1/1. Functionally, catalyzes the ATP-dependent amidation of deamido-NAD to form NAD. Uses ammonia as a nitrogen source. The sequence is that of NH(3)-dependent NAD(+) synthetase from Methanococcoides burtonii (strain DSM 6242 / NBRC 107633 / OCM 468 / ACE-M).